Consider the following 329-residue polypeptide: uncharacterized protein (329 aa).

2 helical membrane-spanning segments follow: residues Ile-13–Ile-35 and Val-229–Tyr-248.

Its subcellular location is the cell membrane. This is an uncharacterized protein from Archaeoglobus fulgidus (strain ATCC 49558 / DSM 4304 / JCM 9628 / NBRC 100126 / VC-16).